The sequence spans 333 residues: Terpene synthase 2 (333 aa).

The DDxx(x)D/E motif motif lies at 82-87 (DDDLDT). Positions 219–227 (NDCVSYAKE) match the NDxxSxxxD/E motif motif.

Belongs to the terpene synthase family.

The catalysed reaction is (2E,6E)-farnesyl diphosphate = (E)-beta-farnesene + diphosphate. It catalyses the reaction (2E,6E)-farnesyl diphosphate = (1S,2S,4R)-beta-elemene + diphosphate. Terpene synthase that converts its substrate farnesyl diphosphate (FPP) into the sesquiterpene (E)-beta-farnesene as major product. Is also able to convert FPP into delta-elemene, beta-elemene, (E)-beta-caryophyllene, 9-epi-(E)-caryophyllene, and a yet unidentified sesquiterpene. The sequence is that of Terpene synthase 2 from Dictyostelium purpureum (Slime mold).